The sequence spans 176 residues: Cytochrome c-552 (176 aa).

Residues glycine 12–phenylalanine 32 form a helical; Signal-anchor membrane-spanning segment. Cysteine 90, cysteine 93, histidine 94, methionine 126, and methionine 154 together coordinate heme c.

In terms of processing, binds 1 heme c group covalently per subunit.

Its subcellular location is the cell membrane. Functionally, mediates the electron transport between the cytochrome bc1 complex and cytochrome-c oxidase. This is Cytochrome c-552 (cycM) from Paracoccus denitrificans.